A 425-amino-acid polypeptide reads, in one-letter code: Gamma-glutamyl phosphate reductase (425 aa).

It belongs to the gamma-glutamyl phosphate reductase family.

It localises to the cytoplasm. The enzyme catalyses L-glutamate 5-semialdehyde + phosphate + NADP(+) = L-glutamyl 5-phosphate + NADPH + H(+). The protein operates within amino-acid biosynthesis; L-proline biosynthesis; L-glutamate 5-semialdehyde from L-glutamate: step 2/2. In terms of biological role, catalyzes the NADPH-dependent reduction of L-glutamate 5-phosphate into L-glutamate 5-semialdehyde and phosphate. The product spontaneously undergoes cyclization to form 1-pyrroline-5-carboxylate. The chain is Gamma-glutamyl phosphate reductase from Opitutus terrae (strain DSM 11246 / JCM 15787 / PB90-1).